The primary structure comprises 196 residues: Peptidyl-tRNA hydrolase (196 aa).

Tyrosine 14 provides a ligand contact to tRNA. The Proton acceptor role is filled by histidine 19. Residues phenylalanine 64, asparagine 66, and asparagine 112 each coordinate tRNA.

It belongs to the PTH family. In terms of assembly, monomer.

It is found in the cytoplasm. The enzyme catalyses an N-acyl-L-alpha-aminoacyl-tRNA + H2O = an N-acyl-L-amino acid + a tRNA + H(+). In terms of biological role, hydrolyzes ribosome-free peptidyl-tRNAs (with 1 or more amino acids incorporated), which drop off the ribosome during protein synthesis, or as a result of ribosome stalling. Its function is as follows. Catalyzes the release of premature peptidyl moieties from peptidyl-tRNA molecules trapped in stalled 50S ribosomal subunits, and thus maintains levels of free tRNAs and 50S ribosomes. The chain is Peptidyl-tRNA hydrolase from Solibacter usitatus (strain Ellin6076).